Here is a 35-residue protein sequence, read N- to C-terminus: Beta/omega-theraphotoxin-Bp1a (35 aa).

Disulfide bonds link C2/C16, C9/C21, and C15/C28.

This sequence belongs to the neurotoxin 10 (Hwtx-1) family. 54 (ProTx-1) subfamily. Post-translationally, an unnatural amidation at Ser-35 provokes a 14-fold increased toxin ability to inhibit Nav1.2/SCN2A and a ~2-fold decreased toxin ability to inhibit both Nav1.5/SCN5A and Nav1.7/SCN9A. As to expression, expressed by the venom gland.

Its subcellular location is the secreted. In terms of biological role, ion channel impairing toxin that inhibits voltage-gated calcium channel Cav3.1/CACNA1G (IC(50)=53 nM), voltage-gated potassium channels Kv2.1/KCNB1 (IC(50)=411 nM), all sodium channels tested (Nav1.2/SCN2A (IC(50)=60-104 nM), Nav1.5/SCN5A (IC(50)=76-358 nM), Nav1.6/SCN8A (IC(50)=21-133 nM), Nav1.7/SCN9A (IC(50)=51-95 nM), and Nav1.8/SCN10A) as well as the nociceptor cation channel TRPA1 (IC(50)=389 nM). Acts as a potent and selective blocker of voltage-gated calcium channel Cav3.1/CACNA1G, but not of Cav3.2/CACNA1H, and Cav3.3/CACNA1I. On Nav1.7/SCN9A, primarily interacts with the DII and DIV voltage-sensor domains. Also acts as an inhibitor of nociceptor cation channel TRPA1 (IC(50)~389 nM) by binding to the S1-S4 gating domain of TRPA1. It shows moderate affinity for lipid bilayers. The chain is Beta/omega-theraphotoxin-Bp1a from Bumba pulcherrimaklaasi (Tarantula spider).